The chain runs to 423 residues: Polyglutamylase complex subunit TTLL1 (423 aa).

The TTL domain maps to 1 to 367 (MAGKVKWVTD…NGEIPDCKWN (367 aa)). Residues K138, 144-145 (QG), 181-184 (SLYI), and 194-196 (KFD) each bind ATP. Residue Q144 coordinates a protein. R220 provides a ligand contact to L-glutamate. Residue 241-242 (TN) participates in ATP binding. K259 is an L-glutamate binding site. Mg(2+) contacts are provided by D313, E326, and N328. L-glutamate is bound at residue K344. Residues 391 to 423 (GADRELRSRQGQSLGPRAGRSRDSGRAVLTTWK) form a disordered region.

It belongs to the tubulin polyglutamylase family. As to quaternary structure, part of the neuronal tubulin polyglutamylase complex which contains TPGS1, TPGS2, TTLL1, LRRC49 and NICN1. Interacts with PCM1, CSTPP1 and LRRC49. Mg(2+) serves as cofactor. Expressed in a wide range of tissues. Has a stronger expression in heart, brain and testis.

Its subcellular location is the cytoplasm. It localises to the cytoskeleton. The protein resides in the cilium basal body. It is found in the cilium axoneme. The protein localises to the cell projection. Its subcellular location is the cilium. It localises to the flagellum. The enzyme catalyses (L-glutamyl)(n)-gamma-L-glutamyl-L-glutamyl-[protein] + L-glutamate + ATP = (L-glutamyl)(n+1)-gamma-L-glutamyl-L-glutamyl-[protein] + ADP + phosphate + H(+). Catalytic subunit of a polyglutamylase complex which modifies tubulin, generating side chains of glutamate on the gamma-carboxyl group of specific glutamate residues within the C-terminal tail of tubulin. Probably involved in the side-chain elongation step of the polyglutamylation reaction rather than the initiation step. Modifies both alpha- and beta-tubulins with a preference for the alpha-tail. Unlike most polyglutamylases of the tubulin--tyrosine ligase family, only displays a catalytic activity when in complex with other proteins as it is most likely lacking domains important for autonomous activity. Part of the neuronal tubulin polyglutamylase complex. Mediates cilia and flagella polyglutamylation which is essential for their biogenesis and motility. Involved in respiratory motile cilia function through the regulation of beating asymmetry. Essential for sperm flagella biogenesis, motility and male fertility. Involved in KLF4 glutamylation which impedes its ubiquitination, thereby leading to somatic cell reprogramming, pluripotency maintenance and embryogenesis. The sequence is that of Polyglutamylase complex subunit TTLL1 from Homo sapiens (Human).